An 89-amino-acid polypeptide reads, in one-letter code: NADH-ubiquinone oxidoreductase chain 4L (89 aa).

The next 3 membrane-spanning stretches (helical) occupy residues 1 to 21 (MNIT…NRKN), 22 to 42 (IILM…LILV), and 57 to 77 (IYII…LVAF).

This sequence belongs to the complex I subunit 4L family.

It is found in the mitochondrion membrane. The enzyme catalyses a ubiquinone + NADH + 5 H(+)(in) = a ubiquinol + NAD(+) + 4 H(+)(out). Its function is as follows. Core subunit of the mitochondrial membrane respiratory chain NADH dehydrogenase (Complex I) that is believed to belong to the minimal assembly required for catalysis. Complex I functions in the transfer of electrons from NADH to the respiratory chain. The immediate electron acceptor for the enzyme is believed to be ubiquinone. The polypeptide is NADH-ubiquinone oxidoreductase chain 4L (ndh-4L) (Neurospora crassa (strain ATCC 24698 / 74-OR23-1A / CBS 708.71 / DSM 1257 / FGSC 987)).